The following is a 529-amino-acid chain: Ribonuclease Y (529 aa).

A helical transmembrane segment spans residues 4-24 (GLIYISLEVLVACLITALIMY). The KH domain occupies 216–297 (LTSRIALPCS…NRIEEVYHRV (82 aa)). The HD domain maps to 342 to 435 (ALQHSKEVAL…VCAADALSAG (94 aa)).

The protein belongs to the RNase Y family.

It is found in the cell membrane. Functionally, endoribonuclease that initiates mRNA decay. This chain is Ribonuclease Y, found in Helicobacter pylori (strain J99 / ATCC 700824) (Campylobacter pylori J99).